Here is a 943-residue protein sequence, read N- to C-terminus: Translation initiation factor IF-2 (943 aa).

The segment at 29-357 is disordered; that stretch reads LSVKSHSSSV…KPVTERKFHE (329 aa). Basic and acidic residues-rich tracts occupy residues 69 to 82, 112 to 137, 145 to 155, 163 to 196, and 224 to 253; these read PKEE…DKAS, FKAE…DNRN, QGKRHNNDRRN, DHNK…RDNA, and RQSE…EKQQ. Residues 254-266 are compositionally biased toward low complexity; that stretch reads AEVAVQKAAAETK. Over residues 296-309 the composition is skewed to basic and acidic residues; it reads KSRDNRRVNEDGPK. Low complexity predominate over residues 313 to 332; it reads NNKWNNQNQVRNQRNSNWNK. The region spanning 445 to 614 is the tr-type G domain; the sequence is ERAPVVTIMG…LLVAEVEELK (170 aa). Residues 454-461 form a G1 region; that stretch reads GHVDHGKT. Residue 454-461 participates in GTP binding; it reads GHVDHGKT. Residues 479-483 form a G2 region; the sequence is GITQH. A G3 region spans residues 500-503; it reads DTPG. GTP-binding positions include 500-504 and 554-557; these read DTPGH and NKID. A G4 region spans residues 554-557; that stretch reads NKID. The segment at 590-592 is G5; the sequence is SAK.

It belongs to the TRAFAC class translation factor GTPase superfamily. Classic translation factor GTPase family. IF-2 subfamily.

It localises to the cytoplasm. In terms of biological role, one of the essential components for the initiation of protein synthesis. Protects formylmethionyl-tRNA from spontaneous hydrolysis and promotes its binding to the 30S ribosomal subunits. Also involved in the hydrolysis of GTP during the formation of the 70S ribosomal complex. This chain is Translation initiation factor IF-2, found in Streptococcus thermophilus (strain CNRZ 1066).